Consider the following 180-residue polypeptide: MRILGIDPGLRVTGFGVIDVSGHQLAYVASGVIKTPTADLPTRLGTIYDGVSTLIREHTPDQAAIEKVFVNVNPQSTLLLGQARGAAICGLVSGGLPVAEYTALQLKQAVVGYGRATKEQMQEMVARLLSLSGRPGTDAADALGMAICHAHGGNTLNTLGGIAPALAKKGLRVRRGRLVG.

Active-site residues include aspartate 7, glutamate 66, and aspartate 138. Mg(2+) is bound by residues aspartate 7, glutamate 66, and aspartate 138.

Belongs to the RuvC family. As to quaternary structure, homodimer which binds Holliday junction (HJ) DNA. The HJ becomes 2-fold symmetrical on binding to RuvC with unstacked arms; it has a different conformation from HJ DNA in complex with RuvA. In the full resolvosome a probable DNA-RuvA(4)-RuvB(12)-RuvC(2) complex forms which resolves the HJ. Mg(2+) serves as cofactor.

Its subcellular location is the cytoplasm. It carries out the reaction Endonucleolytic cleavage at a junction such as a reciprocal single-stranded crossover between two homologous DNA duplexes (Holliday junction).. Functionally, the RuvA-RuvB-RuvC complex processes Holliday junction (HJ) DNA during genetic recombination and DNA repair. Endonuclease that resolves HJ intermediates. Cleaves cruciform DNA by making single-stranded nicks across the HJ at symmetrical positions within the homologous arms, yielding a 5'-phosphate and a 3'-hydroxyl group; requires a central core of homology in the junction. The consensus cleavage sequence is 5'-(A/T)TT(C/G)-3'. Cleavage occurs on the 3'-side of the TT dinucleotide at the point of strand exchange. HJ branch migration catalyzed by RuvA-RuvB allows RuvC to scan DNA until it finds its consensus sequence, where it cleaves and resolves the cruciform DNA. The chain is Crossover junction endodeoxyribonuclease RuvC from Burkholderia pseudomallei (strain 1710b).